A 344-amino-acid polypeptide reads, in one-letter code: Olfactory receptor class A-like protein 4 (344 aa).

The Extracellular segment spans residues 1–10; the sequence is MSEVLTVDAV. The chain crosses the membrane as a helical span at residues 11-31; the sequence is LFGLLVFSGIIGNIMVIYVVF. Residues 32–47 lie on the Cytoplasmic side of the membrane; the sequence is DCAKLCASRHLPPSDT. Residues 48 to 68 form a helical membrane-spanning segment; it reads ILVHLCLANLLTSVFRTVPIF. Residues 69-84 are Extracellular-facing; it reads VSDLGLQVWLTAGWCR. A disulfide bond links C83 and C169. A helical transmembrane segment spans residues 85 to 105; that stretch reads VFMLLWVWWRAVGCWVTLALS. The Cytoplasmic portion of the chain corresponds to 106–130; that stretch reads AFHCATLRRQHVSMGPLGHSRERRR. The helical transmembrane segment at 131–151 threads the bilayer; the sequence is VWVVLAVVWAANLLFSLPALV. Residues 152–186 are Extracellular-facing; the sequence is YTTQVRGNATVELMVISCTTRPLLGCVWEFPTFQQ. A glycan (N-linked (GlcNAc...) asparagine) is linked at N159. Residues 187-207 traverse the membrane as a helical segment; that stretch reads GYAFASSSLALNEVLPLVLMV. The Cytoplasmic segment spans residues 208–246; that stretch reads GTNLATLQALGKHIRTVRAGGSTGAELDRHVSSERKAGH. A helical transmembrane segment spans residues 247-267; that stretch reads VIMALVALFVGCWVLQVAAVT. Over 268–279 the chain is Extracellular; sequence YYNHNRGAHAEG. Residues 280 to 300 form a helical membrane-spanning segment; sequence LLTVAHFSASLFVGFSPLVVA. Residues 301 to 344 are Cytoplasmic-facing; that stretch reads LGHGKLRRRISGILQSCMHRLKQTQDKPAEITEKDGRTTQSAMK. The span at 324-337 shows a compositional bias: basic and acidic residues; that stretch reads TQDKPAEITEKDGR. The segment at 324-344 is disordered; it reads TQDKPAEITEKDGRTTQSAMK.

Belongs to the G-protein coupled receptor 1 family. Highly expressed in the olfactory rosette. Specifically localizes to crypt neurons in the olfactory neuroepithelium. Colocalizes with the inhibitory G-protein gnaia in crypt neurons. Not detected in other tissues tested.

It localises to the cell membrane. In terms of biological role, probable olfactory receptor. This is Olfactory receptor class A-like protein 4 (ora4) from Danio rerio (Zebrafish).